The chain runs to 374 residues: Diels-Alderase fsa2 (374 aa).

The interval 1–216 is beta-sandwich motif; that stretch reads MSNVTVSAFT…MDRVWSPLSW (216 aa). The interval 216–374 is beta-barrel motif; sequence WPQVMTESYY…VGTGGQCELS (159 aa).

This sequence belongs to the Diels-Alderase family.

It carries out the reaction (5S)-3-[(2E,6R,8E,10E,12E)-2,6-dimethyltetradeca-2,8,10,12-tetraenoyl]-5-(hydroxymethyl)pyrrolidine-2,4-dione = trichosetin. It participates in mycotoxin biosynthesis. Diels-Alderase; part of the gene cluster that mediates the biosynthesis of the HIV-1 integrase inhibitor equisetin and of fusarisetin A, both trans-fused decalin-containing tetramic acids showing also antimicrobial activity. The PKS module of fsa1 together with the enoylreductase fsa3 catalyze the formation of the polyketide unit which is then conjugated to L-serine by the condensation domain of the fsa1 NRPS module. Activity of the Dieckmann cyclase domain (RED) results in release of the Dieckmann product intermediate. Diels-Alderase fsa2 is involved in endo-selective Diels-Alder cycloaddition to form the decalin ring, leading to the production of N-desmethylequisetin also called trichosetin. Subsequent N-methylation is carried out by fsa4 to give equisetin. The enzymatic gene responsible for the conversion of equisetin to fusarisetin A has not been identified yet and is probably located outside of the fsa cluster. The protein is Diels-Alderase fsa2 of Fusarium sp. (strain FN080326).